We begin with the raw amino-acid sequence, 1348 residues long: Kinesin-like protein KIF7 (1348 aa).

The 335-residue stretch at 15–349 folds into the Kinesin motor domain; the sequence is PVRVALRVRP…LNYASRAQNI (335 aa). Residue 94–101 participates in ATP binding; sequence GQTGSGKT. The interaction with DLG5 stretch occupies residues 358 to 479; it reads HPEAERVPEE…EDQAAQGTSG (122 aa). Residues 358–1211 form an interaction with SMO region; the sequence is HPEAERVPEE…LGRHMWINQE (854 aa). 2 disordered regions span residues 451–486 and 607–674; these read RSTL…DEGT and AQAD…VCPE. A coiled-coil region spans residues 480 to 542; it reads RKGDEGTQQL…ELRLRLELAQ (63 aa). A compositionally biased stretch (acidic residues) spans 620-636; it reads SEEEGEEEEEEEEEEEE. Coiled-coil stretches lie at residues 698-1057 and 1109-1211; these read APAA…IEAL and FDKV…INQE. Ser903 is subject to Phosphoserine. 2 disordered regions span residues 1288–1314 and 1328–1348; these read LCSE…VLPM and KPRW…KNPL.

This sequence belongs to the TRAFAC class myosin-kinesin ATPase superfamily. Kinesin family. As to quaternary structure, can form homodimers and interacts with microtubules. Interacts with GLI1 and SMO. Interacts with GLI2, GLI3 and SUFU. Interacts with NPHP1. Interacts with SMO and DLG5 (via PDZ4 or guanylate kinase-like domain). In terms of processing, polyubiquitinated by UBR3. As to expression, expressed in heart, lung, liver, kidney, testis, spleen and cerebellum.

It localises to the cell projection. Its subcellular location is the cilium. The protein resides in the cytoplasm. It is found in the cytoskeleton. The protein localises to the cilium basal body. Its function is as follows. Essential for hedgehog signaling regulation: acts both as a negative and a positive regulator of sonic hedgehog (Shh) and Indian hedgehog (Ihh) pathways, acting downstream of SMO, through both SUFU-dependent and -independent mechanisms. Involved in the regulation of microtubular dynamics. Required for proper organization of the ciliary tip and control of ciliary localization of SUFU-GLI2 complexes. Required for localization of GLI3 to cilia in response to Shh. Negatively regulates Shh signaling by preventing inappropriate activation of the transcriptional activator GLI2 in the absence of ligand. Positively regulates Shh signaling by preventing the processing of the transcription factor GLI3 into its repressor form. In keratinocytes, promotes the dissociation of SUFU-GLI2 complexes, GLI2 nuclear translocation and Shh signaling activation. Involved in the regulation of epidermal differentiation and chondrocyte development. The sequence is that of Kinesin-like protein KIF7 (Kif7) from Mus musculus (Mouse).